Reading from the N-terminus, the 513-residue chain is Light-independent protochlorophyllide reductase subunit B (513 aa).

[4Fe-4S] cluster is bound at residue Asp36. Asp274 functions as the Proton donor in the catalytic mechanism. Position 409–410 (409–410 (GL)) interacts with substrate. The interval 426–457 (DAAGPSHHGGHSPKPQAAEPAPQAAPQPENTG) is disordered. Residues 440–454 (PQAAEPAPQAAPQPE) are compositionally biased toward low complexity.

This sequence belongs to the ChlB/BchB/BchZ family. In terms of assembly, protochlorophyllide reductase is composed of three subunits; BchL, BchN and BchB. Forms a heterotetramer of two BchB and two BchN subunits. Requires [4Fe-4S] cluster as cofactor.

It catalyses the reaction chlorophyllide a + oxidized 2[4Fe-4S]-[ferredoxin] + 2 ADP + 2 phosphate = protochlorophyllide a + reduced 2[4Fe-4S]-[ferredoxin] + 2 ATP + 2 H2O. It functions in the pathway porphyrin-containing compound metabolism; bacteriochlorophyll biosynthesis (light-independent). In terms of biological role, component of the dark-operative protochlorophyllide reductase (DPOR) that uses Mg-ATP and reduced ferredoxin to reduce ring D of protochlorophyllide (Pchlide) to form chlorophyllide a (Chlide). This reaction is light-independent. The NB-protein (BchN-BchB) is the catalytic component of the complex. The sequence is that of Light-independent protochlorophyllide reductase subunit B from Roseobacter denitrificans (strain ATCC 33942 / OCh 114) (Erythrobacter sp. (strain OCh 114)).